The following is a 137-amino-acid chain: MANAASGMAVEDECKLKFLELKAKRNYRFIIFRIDGQQVVVEKLGSPQENYDDFTNYLPPNECRYAVYDFDFTTAENIQKSKIFFIAWSPDSSRVRMKMVYASSKDRFKRELDGIQVELQATDPSEMSLDIIKSRAL.

Position 6 is a phosphoserine (serine 6). The ADF-H domain maps to 7–137; that stretch reads GMAVEDECKL…SLDIIKSRAL (131 aa).

The protein belongs to the actin-binding proteins ADF family. As to expression, specifically expressed in pollen.

It is found in the cytoplasm. It localises to the cytoskeleton. In terms of biological role, actin-depolymerizing protein. Severs actin filaments (F-actin) and binds to actin monomers. The polypeptide is Actin-depolymerizing factor 12 (Arabidopsis thaliana (Mouse-ear cress)).